The primary structure comprises 460 residues: A-type ATP synthase subunit B (460 aa).

This sequence belongs to the ATPase alpha/beta chains family. As to quaternary structure, has multiple subunits with at least A(3), B(3), C, D, E, F, H, I and proteolipid K(x).

The protein localises to the cell membrane. Functionally, component of the A-type ATP synthase that produces ATP from ADP in the presence of a proton gradient across the membrane. The B chain is a regulatory subunit. This is A-type ATP synthase subunit B from Methanosarcina barkeri.